The sequence spans 695 residues: Serotransferrin (695 aa).

Positions 1 to 19 (MRLAAGALLACAALGLCLA) are cleaved as a signal peptide. Transferrin-like domains follow at residues 25-347 (VRWC…NLRE) and 361-680 (VKWC…NLRK). 2 cysteine pairs are disulfide-bonded: C28–C67 and C38–C58. R42 is modified (dimethylated arginine). The Fe(3+) site is built by D82 and Y114. 17 disulfides stabilise this stretch: C137-C213, C156-C350, C177-C193, C180-C196, C190-C198, C246-C260, C358-C612, C364-C396, C374-C387, C421-C690, C436-C653, C468-C539, C492-C681, C502-C516, C513-C522, C579-C593, and C631-C636. Hydrogencarbonate contacts are provided by T139, R143, A145, and G146. Residue Y207 participates in Fe(3+) binding. H268 provides a ligand contact to Fe(3+). Position 389 is a phosphoserine (S389). 2 residues coordinate Fe(3+): D411 and Y444. Residues T470, R474, A476, and G477 each coordinate hydrogencarbonate. A glycan (N-linked (GlcNAc...) asparagine) is linked at N509. A Fe(3+)-binding site is contributed by Y533. H601 lines the Fe(3+) pocket. A Phosphoserine modification is found at S682.

This sequence belongs to the transferrin family. As to quaternary structure, monomer. Part of a complex composed of SLC40A1/ferroportin, TF/transferrin and HEPH/hephaestin that transfers iron from cells to transferrin. In terms of tissue distribution, expressed by the liver and secreted in plasma.

The protein localises to the secreted. Its function is as follows. Transferrins are iron binding transport proteins which can bind two Fe(3+) ions in association with the binding of an anion, usually bicarbonate. It is responsible for the transport of iron from sites of absorption and heme degradation to those of storage and utilization. Serum transferrin may also have a further role in stimulating cell proliferation. This Oryctolagus cuniculus (Rabbit) protein is Serotransferrin (TF).